The following is a 495-amino-acid chain: Calcium-dependent protein kinase 11 (495 aa).

Positions 26–284 (YLLGKKLGQG…AHEALCHPWI (259 aa)) constitute a Protein kinase domain. ATP-binding positions include 32–40 (LGQGQFGTT) and K55. D150 acts as the Proton acceptor in catalysis. At S190 the chain carries Phosphoserine. Residues 290-320 (APDKPLDPAVLSRLKQFSQMNKIKKMALRVI) are autoinhibitory domain. 4 EF-hand domains span residues 327-362 (EEIGGLKELFKMIDTDNSGTITFEELKAGLKRVGSE), 363-398 (LMESEIKSLMDAADIDNSGTIDYGEFLAATLHMNKM), 399-434 (EREENLVAAFSYFDKDGSGYITIDELQSACTEFGLC), and 438-468 (LDDMIKEIDLDNDGKIDFSEFTAMMRKGDGV). Positions 340, 342, 344, 346, 351, 376, 378, 380, 382, 387, 412, 414, 416, 418, 423, 446, 448, 450, 452, and 457 each coordinate Ca(2+).

The protein belongs to the protein kinase superfamily. Ser/Thr protein kinase family. CDPK subfamily. In terms of assembly, interacts with Di19.

Its subcellular location is the cytoplasm. The protein localises to the nucleus. The catalysed reaction is L-seryl-[protein] + ATP = O-phospho-L-seryl-[protein] + ADP + H(+). It catalyses the reaction L-threonyl-[protein] + ATP = O-phospho-L-threonyl-[protein] + ADP + H(+). With respect to regulation, activated by calcium. Autophosphorylation may play an important role in the regulation of the kinase activity. Functionally, may play a role in signal transduction pathways that involve calcium as a second messenger. Functions as a regulator of the calcium-mediated abscisic acid (ABA) signaling pathway. Phosphorylates ABA-responsive transcription factors ABF1 and ABF4 in vitro. The protein is Calcium-dependent protein kinase 11 (CPK11) of Arabidopsis thaliana (Mouse-ear cress).